We begin with the raw amino-acid sequence, 856 residues long: Envelope glycoprotein gp160 (856 aa).

Positions 1-32 (MRVKEKYQHLRRWGWRWGTMLLGMLMICSATE) are cleaved as a signal peptide. At 33 to 684 (KLWVTVYYGV…ITNWLWYIKI (652 aa)) the chain is on the extracellular side. Cysteine 54 and cysteine 74 are disulfide-bonded. Asparagine 88, asparagine 136, asparagine 141, asparagine 156, asparagine 160, asparagine 186, asparagine 197, asparagine 230, asparagine 234, asparagine 241, asparagine 262, asparagine 276, asparagine 289, asparagine 295, asparagine 301, asparagine 332, asparagine 339, and asparagine 356 each carry an N-linked (GlcNAc...) asparagine; by host glycan. 5 disulfide bridges follow: cysteine 119/cysteine 205, cysteine 126/cysteine 196, cysteine 131/cysteine 157, cysteine 218/cysteine 247, and cysteine 228/cysteine 239. A V1 region spans residues 131-156 (CTDLKNDTNTNSSSGGMIMEKGEIKN). A V2 region spans residues 157–196 (CSFNISTSIRGKVQKEYAFFYKHDIIPIDNDTTSYTLTSC). The interval 296 to 330 (CTRPNNNTRKRIRIQRGPGRTFVTIGKIGNMRQAH) is V3. Cysteines 296 and 331 form a disulfide. Positions 364–374 (SSGGDLEIVTH) are CD4-binding loop. 2 disulfides stabilise this stretch: cysteine 378–cysteine 445 and cysteine 385–cysteine 418. Positions 385-418 (CNSTQLFNSTWFNSTWSTEGSNNTEGSDTITLPC) are V4. N-linked (GlcNAc...) asparagine; by host glycosylation is found at asparagine 386, asparagine 392, asparagine 397, asparagine 406, asparagine 448, and asparagine 463. V5 stretches follow at residues 461 to 471 (NNNGSEIFRPG) and 463 to 471 (NGSEIFRPG). The fusion peptide stretch occupies residues 512 to 532 (AVGIGALFLGFLGAAGSTMGA). An immunosuppression region spans residues 574–592 (KQLQARILAVERYLKDQQL). An intrachain disulfide couples cysteine 598 to cysteine 604. Asparagine 611, asparagine 616, asparagine 624, asparagine 637, and asparagine 674 each carry an N-linked (GlcNAc...) asparagine; by host glycan. Residues 633–667 (REINNYTSLIHSLIEESQNQQEKNEQELLELDKWA) adopt a coiled-coil conformation. The segment at 662-683 (ELDKWASLWNWFNITNWLWYIK) is MPER; binding to GalCer. The helical transmembrane segment at 685–705 (FIMIVGGLVGLRIVFAVLSIV) threads the bilayer. Residues 706-856 (NRVRQGHSPL…IRQGLERILL (151 aa)) are Cytoplasmic-facing. The segment at 715–742 (LSFQTHLPTPGGPDRPEGIEEEGGERDR) is disordered. S-palmitoyl cysteine; by host attachment occurs at residues cysteine 764 and cysteine 837. The short motif at 855–856 (LL) is the Di-leucine internalization motif element.

Belongs to the HIV-1 env protein family. In terms of assembly, the mature envelope protein (Env) consists of a homotrimer of non-covalently associated gp120-gp41 heterodimers. The resulting complex protrudes from the virus surface as a spike. There seems to be as few as 10 spikes on the average virion. Interacts with host CD4, CCR5 and CXCR4. Gp120 also interacts with the C-type lectins CD209/DC-SIGN and CLEC4M/DC-SIGNR (collectively referred to as DC-SIGN(R)). Gp120 and gp41 interact with GalCer. Gp120 interacts with host ITGA4/ITGB7 complex; on CD4+ T-cells, this interaction results in rapid activation of integrin ITGAL/LFA-1, which facilitates efficient cell-to-cell spreading of HIV-1. Gp120 interacts with cell-associated heparan sulfate; this interaction increases virus infectivity on permissive cells and may be involved in infection of CD4- cells. The mature envelope protein (Env) consists of a homotrimer of non-covalently associated gp120-gp41 heterodimers. The resulting complex protrudes from the virus surface as a spike. There seems to be as few as 10 spikes on the average virion. In terms of processing, highly glycosylated by host. The high number of glycan on the protein is reffered to as 'glycan shield' because it contributes to hide protein sequence from adaptive immune system. Post-translationally, palmitoylation of the transmembrane protein and of Env polyprotein (prior to its proteolytic cleavage) is essential for their association with host cell membrane lipid rafts. Palmitoylation is therefore required for envelope trafficking to classical lipid rafts, but not for viral replication. Specific enzymatic cleavages in vivo yield mature proteins. Envelope glycoproteins are synthesized as an inactive precursor that is heavily N-glycosylated and processed likely by host cell furin in the Golgi to yield the mature SU and TM proteins. The cleavage site between SU and TM requires the minimal sequence [KR]-X-[KR]-R. About 2 of the 9 disulfide bonds of gp41 are reduced by P4HB/PDI, following binding to CD4 receptor.

The protein localises to the virion membrane. It is found in the host cell membrane. Its subcellular location is the host endosome membrane. Oligomerizes in the host endoplasmic reticulum into predominantly trimers. In a second time, gp160 transits in the host Golgi, where glycosylation is completed. The precursor is then proteolytically cleaved in the trans-Golgi and thereby activated by cellular furin or furin-like proteases to produce gp120 and gp41. Functionally, attaches the virus to the host lymphoid cell by binding to the primary receptor CD4. This interaction induces a structural rearrangement creating a high affinity binding site for a chemokine coreceptor like CXCR4 and/or CCR5. Acts as a ligand for CD209/DC-SIGN and CLEC4M/DC-SIGNR, which are respectively found on dendritic cells (DCs), and on endothelial cells of liver sinusoids and lymph node sinuses. These interactions allow capture of viral particles at mucosal surfaces by these cells and subsequent transmission to permissive cells. HIV subverts the migration properties of dendritic cells to gain access to CD4+ T-cells in lymph nodes. Virus transmission to permissive T-cells occurs either in trans (without DCs infection, through viral capture and transmission), or in cis (following DCs productive infection, through the usual CD4-gp120 interaction), thereby inducing a robust infection. In trans infection, bound virions remain infectious over days and it is proposed that they are not degraded, but protected in non-lysosomal acidic organelles within the DCs close to the cell membrane thus contributing to the viral infectious potential during DCs' migration from the periphery to the lymphoid tissues. On arrival at lymphoid tissues, intact virions recycle back to DCs' cell surface allowing virus transmission to CD4+ T-cells. In terms of biological role, acts as a class I viral fusion protein. Under the current model, the protein has at least 3 conformational states: pre-fusion native state, pre-hairpin intermediate state, and post-fusion hairpin state. During fusion of viral and target intracellular membranes, the coiled coil regions (heptad repeats) assume a trimer-of-hairpins structure, positioning the fusion peptide in close proximity to the C-terminal region of the ectodomain. The formation of this structure appears to drive apposition and subsequent fusion of viral and target cell membranes. Complete fusion occurs in host cell endosomes and is dynamin-dependent, however some lipid transfer might occur at the plasma membrane. The virus undergoes clathrin-dependent internalization long before endosomal fusion, thus minimizing the surface exposure of conserved viral epitopes during fusion and reducing the efficacy of inhibitors targeting these epitopes. Membranes fusion leads to delivery of the nucleocapsid into the cytoplasm. The protein is Envelope glycoprotein gp160 of Homo sapiens (Human).